The following is a 218-amino-acid chain: Ribose-5-phosphate isomerase A (218 aa).

Residues 28–31 (TGST), 81–84 (DGAD), and 94–97 (KGGG) each bind substrate. Catalysis depends on E103, which acts as the Proton acceptor. Residue K121 participates in substrate binding.

This sequence belongs to the ribose 5-phosphate isomerase family. In terms of assembly, homodimer.

The enzyme catalyses aldehydo-D-ribose 5-phosphate = D-ribulose 5-phosphate. Its pathway is carbohydrate degradation; pentose phosphate pathway; D-ribose 5-phosphate from D-ribulose 5-phosphate (non-oxidative stage): step 1/1. Catalyzes the reversible conversion of ribose-5-phosphate to ribulose 5-phosphate. The polypeptide is Ribose-5-phosphate isomerase A (Vibrio vulnificus (strain CMCP6)).